The sequence spans 421 residues: MDKLLIRGGRPLMGEVTISGAKNAALPELCAALLCPEPLTLANVPRLQDVGTTLKVLRHLGVEAERSAVLPDQVRLDATRITTREAPYELVKTMRASILVLGPLLARFGEARVSLPGGCAIGSRPVDQHIKGLQAMGAQIVVEHGYIVARAERLKGARITTDMVTVTGTENLLMAATLADGETVLENAAQEPEITDLAELLIAMGAQIEGQGTHRIRIQGVERLHAPAVPHQIIPDRIETGTFLCAVAATGGDVTLRRTRADHLDAVLDKLREACTELECGADWIRVRAAGRPKGVNLRTSEYPAFPTDMQAQFMALNCIAQGTSRVIETIFENRFMHVNELVRLGAHIAVDGHTAIVEGIARLSGATVMATDLRASASLVIAGLVAEGETTVERIYHLDRGYDQMETKLRGIGADIERIK.

Residue 22–23 coordinates phosphoenolpyruvate; sequence KN. Position 95 (arginine 95) interacts with UDP-N-acetyl-alpha-D-glucosamine. The Proton donor role is filled by cysteine 119. 2-(S-cysteinyl)pyruvic acid O-phosphothioketal is present on cysteine 119. UDP-N-acetyl-alpha-D-glucosamine is bound by residues 124–128, aspartate 309, and isoleucine 331; that span reads RPVDQ.

Belongs to the EPSP synthase family. MurA subfamily.

The protein resides in the cytoplasm. It catalyses the reaction phosphoenolpyruvate + UDP-N-acetyl-alpha-D-glucosamine = UDP-N-acetyl-3-O-(1-carboxyvinyl)-alpha-D-glucosamine + phosphate. It functions in the pathway cell wall biogenesis; peptidoglycan biosynthesis. In terms of biological role, cell wall formation. Adds enolpyruvyl to UDP-N-acetylglucosamine. The sequence is that of UDP-N-acetylglucosamine 1-carboxyvinyltransferase from Leptothrix cholodnii (strain ATCC 51168 / LMG 8142 / SP-6) (Leptothrix discophora (strain SP-6)).